Here is a 304-residue protein sequence, read N- to C-terminus: Large ribosomal subunit protein uL2m (304 aa).

Residues 1 to 60 (MALCALASALRSLSLASPAITARVPTLLPVGQSNVLLQLPSALALPAHRPVHMSADRSAK) constitute a mitochondrion transit peptide.

The protein belongs to the universal ribosomal protein uL2 family. In terms of assembly, component of the mitochondrial ribosome large subunit (39S) which comprises a 16S rRNA and about 50 distinct proteins.

It is found in the mitochondrion. The sequence is that of Large ribosomal subunit protein uL2m (Mrpl2) from Rattus norvegicus (Rat).